We begin with the raw amino-acid sequence, 387 residues long: Exodeoxyribonuclease 7 large subunit (387 aa).

It belongs to the XseA family. As to quaternary structure, heterooligomer composed of large and small subunits.

It is found in the cytoplasm. It carries out the reaction Exonucleolytic cleavage in either 5'- to 3'- or 3'- to 5'-direction to yield nucleoside 5'-phosphates.. Functionally, bidirectionally degrades single-stranded DNA into large acid-insoluble oligonucleotides, which are then degraded further into small acid-soluble oligonucleotides. In Synechococcus sp. (strain CC9605), this protein is Exodeoxyribonuclease 7 large subunit.